A 323-amino-acid chain; its full sequence is ATP synthase gamma chain (323 aa).

Residues 206–240 (NPIVNLVGFGYKERGVKPINNRRATSDIVGESKSI) are insert.

It belongs to the ATPase gamma chain family. F-type ATPases have 2 components, CF(1) - the catalytic core - and CF(0) - the membrane proton channel. CF(1) has five subunits: alpha(3), beta(3), gamma(1), delta(1), epsilon(1). CF(0) has three main subunits: a, b and c.

It is found in the cell inner membrane. Produces ATP from ADP in the presence of a proton gradient across the membrane. The gamma chain is believed to be important in regulating ATPase activity and the flow of protons through the CF(0) complex. This is ATP synthase gamma chain from Rickettsia conorii (strain ATCC VR-613 / Malish 7).